Consider the following 1326-residue polypeptide: Probable serine/threonine-protein kinase gdt8 (1326 aa).

Residues 1 to 22 (MINKILIKLITIIIFCFSFLFA) form the signal peptide. At 23–782 (EEDLIRTPPG…VDRNENLELK (760 aa)) the chain is on the extracellular side. Disordered stretches follow at residues 419 to 467 (VDQN…GNQG) and 731 to 762 (EPPT…QTPI). 2 stretches are compositionally biased toward low complexity: residues 422-460 (NNNN…NNNN) and 731-761 (EPPT…TQTP). Residues 783–803 (IALPICLSLALLIGIIIMICI) traverse the membrane as a helical segment. The Cytoplasmic segment spans residues 804–1326 (FKKVQSNSKL…TKEDKDLDEN (523 aa)). The disordered stretch occupies residues 833–858 (IVSQPPTVIEEKPQDNSKPDDQKLIE). The span at 841 to 858 (IEEKPQDNSKPDDQKLIE) shows a compositional bias: basic and acidic residues. A Protein kinase domain is found at 1036–1292 (IKTEQLIASY…FSEISLHLEI (257 aa)). Residues 1042–1050 (IASYLPSKV) and Lys1065 contribute to the ATP site. Asp1158 functions as the Proton acceptor in the catalytic mechanism. Residues 1301–1326 (MNESEESTSNHNTNSKTKEDKDLDEN) form a disordered region. The span at 1316 to 1326 (KTKEDKDLDEN) shows a compositional bias: basic and acidic residues.

It in the N-terminal section; belongs to the GDT family. In the C-terminal section; belongs to the protein kinase superfamily. TKL Ser/Thr protein kinase family.

The protein resides in the membrane. The enzyme catalyses L-seryl-[protein] + ATP = O-phospho-L-seryl-[protein] + ADP + H(+). The catalysed reaction is L-threonyl-[protein] + ATP = O-phospho-L-threonyl-[protein] + ADP + H(+). This Dictyostelium discoideum (Social amoeba) protein is Probable serine/threonine-protein kinase gdt8 (gdt8).